A 520-amino-acid polypeptide reads, in one-letter code: Putative lipase ATG15 (520 aa).

Over 1-14 (MLHKSPSRKRFASP) the chain is Cytoplasmic. The chain crosses the membrane as a helical; Signal-anchor for type II membrane protein span at residues 15 to 35 (LHLGCILTLTVLCLIAYYFAL). At 36–520 (PDYLSVGKSS…WLGFCTKYEL (485 aa)) the chain is on the lumenal side. N-linked (GlcNAc...) asparagine glycans are attached at residues N173, N202, and N208. The Charge relay system role is filled by S332.

Belongs to the AB hydrolase superfamily. Lipase family. Binds to both phosphatidylinositol (PI) and phosphatidylinositol 3,5-bisphosphate (PIP2). In terms of processing, glycosylated.

The protein resides in the endosome. It is found in the multivesicular body membrane. The protein localises to the prevacuolar compartment membrane. It catalyses the reaction a triacylglycerol + H2O = a diacylglycerol + a fatty acid + H(+). In terms of biological role, lipase which is essential for lysis of subvacuolar cytoplasm to vacuole targeted bodies and intravacuolar autophagic bodies. Involved in the lysis of intravacuolar multivesicular body (MVB) vesicles. The intravacuolar membrane disintegration by ATG15 is critical to life span extension. The chain is Putative lipase ATG15 (ATG15) from Saccharomyces cerevisiae (strain ATCC 204508 / S288c) (Baker's yeast).